A 346-amino-acid polypeptide reads, in one-letter code: tRNA N6-adenosine threonylcarbamoyltransferase (346 aa).

Fe cation contacts are provided by His-111 and His-115. Substrate contacts are provided by residues 134-138 (LVSGG), Asp-167, Gly-180, and Asn-277. Position 305 (Asp-305) interacts with Fe cation.

The protein belongs to the KAE1 / TsaD family. The cofactor is Fe(2+).

It is found in the cytoplasm. It carries out the reaction L-threonylcarbamoyladenylate + adenosine(37) in tRNA = N(6)-L-threonylcarbamoyladenosine(37) in tRNA + AMP + H(+). Its function is as follows. Required for the formation of a threonylcarbamoyl group on adenosine at position 37 (t(6)A37) in tRNAs that read codons beginning with adenine. Is involved in the transfer of the threonylcarbamoyl moiety of threonylcarbamoyl-AMP (TC-AMP) to the N6 group of A37, together with TsaE and TsaB. TsaD likely plays a direct catalytic role in this reaction. The chain is tRNA N6-adenosine threonylcarbamoyltransferase from Bordetella pertussis (strain Tohama I / ATCC BAA-589 / NCTC 13251).